Consider the following 336-residue polypeptide: Holliday junction branch migration complex subunit RuvB (336 aa).

A large ATPase domain (RuvB-L) region spans residues 4-184; that stretch reads ADRLISAGAT…FGIVQRLEFY (181 aa). ATP contacts are provided by residues Ile-23, Arg-24, Gly-65, Lys-68, Thr-69, Thr-70, 131–133, Arg-174, Tyr-184, and Arg-221; that span reads EDY. Residue Thr-69 participates in Mg(2+) binding. The interval 185–255 is small ATPAse domain (RuvB-S); sequence QVPDLQHIVG…IAAQALDMLN (71 aa). A head domain (RuvB-H) region spans residues 258-336; that stretch reads AEGFDYMDRK…HFGITPPEMP (79 aa). Positions 294, 313, and 318 each coordinate DNA.

The protein belongs to the RuvB family. Homohexamer. Forms an RuvA(8)-RuvB(12)-Holliday junction (HJ) complex. HJ DNA is sandwiched between 2 RuvA tetramers; dsDNA enters through RuvA and exits via RuvB. An RuvB hexamer assembles on each DNA strand where it exits the tetramer. Each RuvB hexamer is contacted by two RuvA subunits (via domain III) on 2 adjacent RuvB subunits; this complex drives branch migration. In the full resolvosome a probable DNA-RuvA(4)-RuvB(12)-RuvC(2) complex forms which resolves the HJ.

The protein localises to the cytoplasm. The catalysed reaction is ATP + H2O = ADP + phosphate + H(+). The RuvA-RuvB-RuvC complex processes Holliday junction (HJ) DNA during genetic recombination and DNA repair, while the RuvA-RuvB complex plays an important role in the rescue of blocked DNA replication forks via replication fork reversal (RFR). RuvA specifically binds to HJ cruciform DNA, conferring on it an open structure. The RuvB hexamer acts as an ATP-dependent pump, pulling dsDNA into and through the RuvAB complex. RuvB forms 2 homohexamers on either side of HJ DNA bound by 1 or 2 RuvA tetramers; 4 subunits per hexamer contact DNA at a time. Coordinated motions by a converter formed by DNA-disengaged RuvB subunits stimulates ATP hydrolysis and nucleotide exchange. Immobilization of the converter enables RuvB to convert the ATP-contained energy into a lever motion, pulling 2 nucleotides of DNA out of the RuvA tetramer per ATP hydrolyzed, thus driving DNA branch migration. The RuvB motors rotate together with the DNA substrate, which together with the progressing nucleotide cycle form the mechanistic basis for DNA recombination by continuous HJ branch migration. Branch migration allows RuvC to scan DNA until it finds its consensus sequence, where it cleaves and resolves cruciform DNA. The sequence is that of Holliday junction branch migration complex subunit RuvB from Salmonella agona (strain SL483).